Here is a 964-residue protein sequence, read N- to C-terminus: MRNTKASKFSDRHLGLIEEAQVEILNALGHADINDFISSVVPEEILDAQPPDELLPKALNEIEALEELRSIAKKNQIKRSLIGLGYYGTYTPAVIQRHVFENPAWYTSYTPYQAEIAQGRLEALFNFQTLITELTGLPIANASLLDEGTAAAEAMSLSFAVNKQTKARKFIVDDQVLPQTLAVLKTRAEPLELDIEVVNLTDLVINETVFGLLIQLPGKSGQLWDPSSLIAQAHEFNALVTVAIDPLAQVLIAPMGQLGVDIAIGSSQRFGVPIGFGGPHAAFFAIKEEYKRLVPGRLVGQSIDSKGHSALRLALQTREQHIRRDKATSNICTAQALLATIASFYAVYHGPHGLEEIAKNIIYLRSQLELYLKEFGYTFAPDCRFDTLEIHCLEAPEIHRLSILSGFNLRILPLGASIEKSKGFAVSFDELSTTKELYKLCKIFADVKDKNFEPRENTNFNFKESLTSLPLRTTPWLKQQVFNNYRTETELMRYIQKLASRDFSLVNGMIPLGSCTMKLNATAELLPITWKEFSSIHPFVPSDQAKGYGYLSEQLEGWLCALTGFDGVSLQPNAGSQGEFAGLLVIRAWHKAINQADRNICLIPKSAHGTNPASAVMAGFKVVAVECDEYGNIDFEDLVLKVETYSSELGALMITYPSTHGVFEPNIRQICDQVHLHGGQVYLDGANLNAQVGLCRPGAFGADVCHLNLHKTFCIPHGGGGPGIGPIAVAKHLVAFLPSKNFHASDNNAAIGAISASPLGSASILPISWMYIRMMGADGLRQASSLAILSANYIANKLDPYFQVLFKAPNGKVAHECILDLRSIKRITGIEVDDVAKRLMDYGFHAPTISWPVAGTLMIEPTESESFEEINRFCEAMISIRSEIDAIESGITDLSNNPLRLAPHTMETVTAEIWDRPYTRQQAAFPLKDQFMNKFWPAVSRIDNAFGDRNLVCSCSTLEELSET.

K711 is modified (N6-(pyridoxal phosphate)lysine).

This sequence belongs to the GcvP family. In terms of assembly, the glycine cleavage system is composed of four proteins: P, T, L and H. Pyridoxal 5'-phosphate is required as a cofactor.

It carries out the reaction N(6)-[(R)-lipoyl]-L-lysyl-[glycine-cleavage complex H protein] + glycine + H(+) = N(6)-[(R)-S(8)-aminomethyldihydrolipoyl]-L-lysyl-[glycine-cleavage complex H protein] + CO2. In terms of biological role, the glycine cleavage system catalyzes the degradation of glycine. The P protein binds the alpha-amino group of glycine through its pyridoxal phosphate cofactor; CO(2) is released and the remaining methylamine moiety is then transferred to the lipoamide cofactor of the H protein. The sequence is that of Glycine dehydrogenase (decarboxylating) from Prochlorococcus marinus (strain SARG / CCMP1375 / SS120).